The primary structure comprises 316 residues: Acetaldehyde dehydrogenase (316 aa).

11–14 (SGNI) serves as a coordination point for NAD(+). Catalysis depends on Cys131, which acts as the Acyl-thioester intermediate. Residues 162-170 (SAGPGTRAN) and Asn289 each bind NAD(+).

This sequence belongs to the acetaldehyde dehydrogenase family. In terms of assembly, interacts with MhpE.

It carries out the reaction acetaldehyde + NAD(+) + CoA = acetyl-CoA + NADH + H(+). It functions in the pathway aromatic compound metabolism; 3-phenylpropanoate degradation. Its function is as follows. Catalyzes the conversion of acetaldehyde to acetyl-CoA, using NAD(+) and coenzyme A. Is the final enzyme in the meta-cleavage pathway for the degradation of aromatic compounds. This chain is Acetaldehyde dehydrogenase, found in Escherichia coli O7:K1 (strain IAI39 / ExPEC).